A 246-amino-acid chain; its full sequence is UL16-binding protein 6 (246 aa).

Positions 1–25 (MAAAAIPALLLCLPLLFLLFGWSRA) are cleaved as a signal peptide. The MHC class I alpha-1 like stretch occupies residues 29–117 (DPHSLCYDIT…IQLENYTPKE (89 aa)). C50 and C66 are joined by a disulfide. N-linked (GlcNAc...) asparagine glycans are attached at residues N68 and N82. An MHC class I alpha-2 like region spans residues 118–210 (PLTLQARMSC…MDSTLEPSAG (93 aa)). C127 and C190 are joined by a disulfide. The GPI-anchor amidated glycine moiety is linked to residue G218. The propeptide at 219–246 (TTQLRATATTLILCCLLIILPCFILPGI) is removed in mature form.

It belongs to the MHC class I family. As to quaternary structure, interacts with KLRK1/NKG2D. (Microbial infection) In CMV-infected cells, interacts with the viral glycoprotein UL16; this interaction causes relocalization from the cell surface to the cytoplasm and prevents binding to and activation of KLRK1/NKG2D, providing CMV with an immune evasion mechanism. In terms of tissue distribution, widely expressed. Expressed in trachea. Constitutively expressed in peripheral blood mononuclear cells, including B-cells and natural killer cells, as well as CD4+ and CD8+ T-cells and monocytes. Tends to be up-regulated in various lymphoid malignancies, including chronic lymphocytic leukemia.

The protein localises to the cell membrane. The protein resides in the endoplasmic reticulum. Functionally, binds and activates the KLRK1/NKG2D receptor, mediating natural killer cell cytotoxicity. This chain is UL16-binding protein 6 (RAET1L), found in Homo sapiens (Human).